A 585-amino-acid polypeptide reads, in one-letter code: Arginine--tRNA ligase (585 aa).

Positions 131 to 141 (ANPTGPMHVGH) match the 'HIGH' region motif.

It belongs to the class-I aminoacyl-tRNA synthetase family. In terms of assembly, monomer.

The protein localises to the cytoplasm. It carries out the reaction tRNA(Arg) + L-arginine + ATP = L-arginyl-tRNA(Arg) + AMP + diphosphate. The protein is Arginine--tRNA ligase of Brucella melitensis biotype 1 (strain ATCC 23456 / CCUG 17765 / NCTC 10094 / 16M).